The chain runs to 106 residues: Large ribosomal subunit protein eL42 (106 aa).

Belongs to the eukaryotic ribosomal protein eL42 family.

The protein is Large ribosomal subunit protein eL42 (RPL44) of Cyberlindnera jadinii (Torula yeast).